Reading from the N-terminus, the 91-residue chain is Uteroglobin (91 aa).

The first 21 residues, 1 to 21 (MKLAITLALVTLALLCSPASA), serve as a signal peptide directing secretion.

It belongs to the secretoglobin family. As to quaternary structure, antiparallel homodimer; disulfide-linked. Interaction with LMBR1L is controversial. Synthesized in the uterus and lung.

The protein resides in the secreted. Its function is as follows. Uteroglobin binds progesterone specifically and with high affinity. It may regulate progesterone concentrations reaching the blastocyst. It is also a potent inhibitor of phospholipase A2. This chain is Uteroglobin (SCGB1A1), found in Oryctolagus cuniculus (Rabbit).